The primary structure comprises 393 residues: Selenide, water dikinase (393 aa).

The segment at 1–21 is disordered; the sequence is MSEKEGKVIPETNGMKRPRFD. The active site involves Cys42. ATP contacts are provided by residues Lys45, 68 to 70, Asp93, Asp116, and 167 to 170; these read GMD and GGQT. Asp70 is a Mg(2+) binding site. Residue Asp116 participates in Mg(2+) binding. Residue Asp273 coordinates Mg(2+).

This sequence belongs to the selenophosphate synthase 1 family. Class I subfamily. As to quaternary structure, homodimer. The cofactor is Mg(2+).

The catalysed reaction is hydrogenselenide + ATP + H2O = selenophosphate + AMP + phosphate + 2 H(+). In terms of biological role, synthesizes selenophosphate from selenide and ATP. This is Selenide, water dikinase from Trypanosoma brucei brucei (strain 927/4 GUTat10.1).